The sequence spans 446 residues: Glucose-1-phosphate adenylyltransferase (446 aa).

Residues Y119, G184, 199 to 200 (EK), and S217 each bind alpha-D-glucose 1-phosphate.

The protein belongs to the bacterial/plant glucose-1-phosphate adenylyltransferase family. Homotetramer.

The catalysed reaction is alpha-D-glucose 1-phosphate + ATP + H(+) = ADP-alpha-D-glucose + diphosphate. The protein operates within glycan biosynthesis; glycogen biosynthesis. Functionally, involved in the biosynthesis of ADP-glucose, a building block required for the elongation reactions to produce glycogen. Catalyzes the reaction between ATP and alpha-D-glucose 1-phosphate (G1P) to produce pyrophosphate and ADP-Glc. This chain is Glucose-1-phosphate adenylyltransferase, found in Rhodopirellula baltica (strain DSM 10527 / NCIMB 13988 / SH1).